The chain runs to 159 residues: ATP synthase subunit b' (159 aa).

Residues 27–47 (ATLPLMAVQFLILTVILNALL) traverse the membrane as a helical segment.

This sequence belongs to the ATPase B chain family. As to quaternary structure, F-type ATPases have 2 components, F(1) - the catalytic core - and F(0) - the membrane proton channel. F(1) has five subunits: alpha(3), beta(3), gamma(1), delta(1), epsilon(1). F(0) has four main subunits: a(1), b(1), b'(1) and c(10-14). The alpha and beta chains form an alternating ring which encloses part of the gamma chain. F(1) is attached to F(0) by a central stalk formed by the gamma and epsilon chains, while a peripheral stalk is formed by the delta, b and b' chains.

Its subcellular location is the cellular thylakoid membrane. In terms of biological role, f(1)F(0) ATP synthase produces ATP from ADP in the presence of a proton or sodium gradient. F-type ATPases consist of two structural domains, F(1) containing the extramembraneous catalytic core and F(0) containing the membrane proton channel, linked together by a central stalk and a peripheral stalk. During catalysis, ATP synthesis in the catalytic domain of F(1) is coupled via a rotary mechanism of the central stalk subunits to proton translocation. Component of the F(0) channel, it forms part of the peripheral stalk, linking F(1) to F(0). The b'-subunit is a diverged and duplicated form of b found in plants and photosynthetic bacteria. This is ATP synthase subunit b' from Synechococcus sp. (strain PCC 6716).